The chain runs to 804 residues: Leucine--tRNA ligase (804 aa).

The short motif at 40-51 is the 'HIGH' region element; the sequence is PYPSGAGLHVGH. The 'KMSKS' region motif lies at 576-580; it reads KMSKS. Lys579 is a binding site for ATP.

This sequence belongs to the class-I aminoacyl-tRNA synthetase family.

It localises to the cytoplasm. The enzyme catalyses tRNA(Leu) + L-leucine + ATP = L-leucyl-tRNA(Leu) + AMP + diphosphate. The sequence is that of Leucine--tRNA ligase from Staphylococcus aureus (strain bovine RF122 / ET3-1).